The following is a 252-amino-acid chain: 2-succinyl-6-hydroxy-2,4-cyclohexadiene-1-carboxylate synthase (252 aa).

The protein belongs to the AB hydrolase superfamily. MenH family. In terms of assembly, monomer.

It carries out the reaction 5-enolpyruvoyl-6-hydroxy-2-succinyl-cyclohex-3-ene-1-carboxylate = (1R,6R)-6-hydroxy-2-succinyl-cyclohexa-2,4-diene-1-carboxylate + pyruvate. It participates in quinol/quinone metabolism; 1,4-dihydroxy-2-naphthoate biosynthesis; 1,4-dihydroxy-2-naphthoate from chorismate: step 3/7. It functions in the pathway quinol/quinone metabolism; menaquinone biosynthesis. Catalyzes a proton abstraction reaction that results in 2,5-elimination of pyruvate from 2-succinyl-5-enolpyruvyl-6-hydroxy-3-cyclohexene-1-carboxylate (SEPHCHC) and the formation of 2-succinyl-6-hydroxy-2,4-cyclohexadiene-1-carboxylate (SHCHC). In Shigella sonnei (strain Ss046), this protein is 2-succinyl-6-hydroxy-2,4-cyclohexadiene-1-carboxylate synthase.